The sequence spans 1549 residues: Trichohyalin (1549 aa).

The interval 1–91 is S-100-like; sequence MSPLLRSIFN…AAACYYALGQ (91 aa). 2 EF-hand domains span residues 23 to 48 and 49 to 84; these read CDGT…LRKP and HDPE…VAAA. Ca(2+) contacts are provided by Thr-27, Asp-32, Asp-62, Asp-64, Asp-66, and Glu-73. Disordered stretches follow at residues 97 to 125, 157 to 180, 262 to 359, and 404 to 448; these read EKEA…PQDR, LQRR…GREL, LRRK…KQEQ, and QREK…RQER. Composition is skewed to basic and acidic residues over residues 171–180, 262–278, and 317–335; these read LQQRPKGREL, LRRK…RQEQ, and HRQE…ERQQ. Over residues 336 to 348 the composition is skewed to low complexity; the sequence is EQQISEEVQSLQE. A compositionally biased stretch (basic and acidic residues) spans 349 to 359; it reads DQGRQRLKQEQ. 14 repeat units span residues 413-448, 449-476, 477-504, 505-532, 533-560, 561-588, 589-616, 617-644, 645-678, 679-706, 707-742, 743-771, 772-796, and 797-832. The 14 X 28 AA approximate tandem repeats stretch occupies residues 413-832; it reads ERQYREVELQ…ECEKRRRQEL (420 aa). Disordered stretches follow at residues 782–803, 839–942, and 980–1000; these read REEE…YREE, EELQ…RKFR, and QLRQ…ERDR. 3 stretches are compositionally biased toward basic and acidic residues: residues 850–884, 895–918, and 925–942; these read FRDD…DSWV, PLQD…KRDS, and LLER…RKFR. Tandem repeats lie at residues 938–961, 962–985, 986–1021, 1022–1044, 1045–1067, 1068–1090, 1091–1121, 1122–1144, 1145–1167, 1168–1197, 1198–1227, 1228–1250, 1251–1273, 1274–1296, 1297–1319, 1320–1342, 1343–1368, 1369–1391, 1392–1416, 1417–1439, 1440–1461, 1462–1484, and 1485–1507. The 23 X 23 AA approximate tandem repeats stretch occupies residues 938-1507; it reads DRKFREEEQL…ERDVQQSRRQ (570 aa). The segment covering 1489 to 1523 has biased composition (basic and acidic residues); the sequence is QQEEQKRRQERDVQQSRRQVWEEDKGRRQVLEAGK. The disordered stretch occupies residues 1489 to 1549; the sequence is QQEEQKRRQE…IQEQRSQYRP (61 aa).

The protein belongs to the S100-fused protein family. Homodimer. Substrate of transglutaminase. Some 200 arginines are probably converted to citrullines by peptidylarginine deimidase. Found in the hard keratinizing tissues such as the inner root sheath (IRS) of hair follicles and medulla, and in the epithelia of the tongue, hoof and rumen.

In terms of biological role, intermediate filament-associated protein that associates in regular arrays with keratin intermediate filaments (KIF) of the inner root sheath cells of the hair follicle and the granular layer of the epidermis. It later becomes cross-linked to KIF by isodipeptide bonds. It may serve as scaffold protein, together with involucrin, in the organization of the cell envelope or even anchor the cell envelope to the KIF network. It may be involved in its own calcium-dependent postsynthetic processing during terminal differentiation. The sequence is that of Trichohyalin (TCHH) from Ovis aries (Sheep).